A 197-amino-acid polypeptide reads, in one-letter code: Baseplate puncturing device gp45 (197 aa).

A disordered region spans residues 172 to 197; the sequence is DAIINGKSTDKHIHRGDSGGTTGPMQ. Residues 179-188 are compositionally biased toward basic and acidic residues; sequence STDKHIHRGD. Fe cation contacts are provided by His-183 and His-185. Ca(2+) is bound by residues Asp-188 and Ser-189. Asp-188 is a chloride binding site.

As to quaternary structure, homotrimer. Part of a complex composed of three DNA circularization protein N, three baseplate hub protein gp44 and three sub-complex wedge (made of two copies of each baseplate protein gp46, gp47 and gp48) that forms the baseplate. The cofactor is Ca(2+). It depends on chloride as a cofactor. Fe cation serves as cofactor.

The protein localises to the virion. It localises to the host cytoplasm. In terms of biological role, component of the baseplate that forms a central needlelike spike used to puncture the host cell membrane for tube insertion during virus entry. Probably involved in baseplate and tail assembly. Serves as the distal plug of tail tube channel and might regulate the process of the phage DNA and protein ejection into the host cell. In Escherichia phage Mu (Bacteriophage Mu), this protein is Baseplate puncturing device gp45.